The following is a 448-amino-acid chain: Proline iminopeptidase aneH (448 aa).

Positions 64–191 (PWMLYLQGGP…VEVFIGGGPC (128 aa)) constitute an AB hydrolase-1 domain. The active-site Nucleophile is Ser-164. The active site involves Asp-397. Catalysis depends on His-425, which acts as the Proton donor.

The protein belongs to the peptidase S33 family. As to quaternary structure, homooligomer.

The protein localises to the cytoplasm. It carries out the reaction Release of N-terminal proline from a peptide.. It functions in the pathway secondary metabolite biosynthesis. In terms of biological role, proline iminopeptidase; part of the gene cluster that mediates the biosynthesis of aculenes, a unique type of norsesquiterpenes that contain a nordaucane skeleton linked to an L-proline moiety and are of mixed biosynthetic origin. The pathway begins with the synthesis of dauca-4,7-diene by the terpene cyclase aneC using farnesyl pyrophosphate (FPP) as substrate. The cytochrome P450 monooxygenase aneF then performs the initial oxidation at C-12 of dauca-4,7-diene to yield asperaculane D. Asperaculane D is substrate of the cytochrome P450 monooxygenase aneD for C-10 hydroxylation to yield asperaculane E. The cytochrome P450 monooxygenase aneG then converts asperaculane E into aculene D via C-2 oxidation. The monomodular nonribosomal peptide synthtase aneB adenylates L-proline and the thiohydrolase aneE transfers this activated L-proline derivative to aculenes D and C to produce respectively aculenes B and A. The dioxygenase aneA converts aculene D into aculene C, and aculene B into aculene A by introducing the 5,6-alkene moiety. Asperculanes A, B, C and F, as well as 14-prolyl asperculane C, might be shunt products of the pathway. This is Proline iminopeptidase aneH from Aspergillus aculeatus (strain ATCC 16872 / CBS 172.66 / WB 5094).